The chain runs to 1342 residues: DNA-directed RNA polymerase subunit beta (1342 aa).

This sequence belongs to the RNA polymerase beta chain family. The RNAP catalytic core consists of 2 alpha, 1 beta, 1 beta' and 1 omega subunit. When a sigma factor is associated with the core the holoenzyme is formed, which can initiate transcription.

It carries out the reaction RNA(n) + a ribonucleoside 5'-triphosphate = RNA(n+1) + diphosphate. In terms of biological role, DNA-dependent RNA polymerase catalyzes the transcription of DNA into RNA using the four ribonucleoside triphosphates as substrates. The chain is DNA-directed RNA polymerase subunit beta from Wigglesworthia glossinidia brevipalpis.